Reading from the N-terminus, the 106-residue chain is Isocitrate dehydrogenase [NAD] subunit gamma, mitochondrial (106 aa).

Belongs to the isocitrate and isopropylmalate dehydrogenases family. As to quaternary structure, heterooligomer of subunits alpha (IDH3A), beta (IDH3B), and gamma (IDH3G) in the apparent ratio of 2:1:1. The heterodimer containing one IDH3A and one IDH3B subunit and the heterodimer containing one IDH3A and one IDH3G subunit assemble into a heterotetramer (which contains two subunits of IDH3A, one of IDH3B and one of IDH3G) and further into the heterooctamer.

The protein localises to the mitochondrion. The heterotetramer and the heterodimer composed of IDH3A and IDH3G subunits can be allosterically activated by citrate (CIT) or/and ADP, and the two activators can act independently or synergistically. The heterodimer composed of IDH3A and IDH3B subunits cannot be allosterically regulated and the allosteric regulation of the heterotetramer is through the IDH3G subunit and not the IDH3B subunit. The IDH3G subunit contains the allosteric site which consists of a CIT-binding site and an ADP-binding site, and the binding of CIT and ADP causes conformational changes at the allosteric site which are transmitted to the active site in the catalytic subunit (IDH3A) through a cascade of conformational changes at the heterodimer interface, leading to stabilization of the isocitrate-binding at the active site and thus activation of the enzyme. ATP can activate the heterotetramer and the heterodimer composed of IDH3A and IDH3G subunits at low concentrations but inhibits their activities at high concentrations, whereas ATP exhibits only inhibitory effect on the heterodimer composed of IDH3A and IDH3B subunits. In terms of biological role, regulatory subunit which plays a role in the allosteric regulation of the enzyme catalyzing the decarboxylation of isocitrate (ICT) into alpha-ketoglutarate. The heterodimer composed of the alpha (IDH3A) and beta (IDH3B) subunits and the heterodimer composed of the alpha (IDH3A) and gamma (IDH3G) subunits, have considerable basal activity but the full activity of the heterotetramer (containing two subunits of IDH3A, one of IDH3B and one of IDH3G) requires the assembly and cooperative function of both heterodimers. The sequence is that of Isocitrate dehydrogenase [NAD] subunit gamma, mitochondrial (IDH3G) from Sus scrofa (Pig).